Reading from the N-terminus, the 702-residue chain is MTPLSALTSNPAPSPPPKFALGKCPATAIHVVSVLRPNRQRFCYEKTDAGDLIPHKCLICQPILTEKHISPYYAVYSDLLEDFVLFGYNTMTGKMEQFIYAFKTDCFVEVNRPEIKYNPAFLVKGNVVVALNGPEGELVVIERDCRGLLSKESTSYGQFRTLPTAALRTLTLQDLERDRWDRAANSDEVKISSGNESFDRLYAEYQKNLPRFQVRQCLHLNKEFLCVYSKTSGDYTRLEYIDETGDFQKISCTLCTCEVTESNLIPLYVERNASELVIHVHNTENNQIEQYIYDVRTFGFVQVKRNLVYDPKKITSGLNLFMAENIDNRKVYMIMRGRDGRLQKETSGSGGFEKMQPVAVKTFQVQWVEMKTEFEKKKASTERVEPQHPVQTEGEDIMETVLAMVESFNCDLRKELGLTQDQEIPRKAPRVESAETEENIVKNLEKLQIAKDPEEPTTAASEGGNTYGYQELDDTMSEGLLEKEAESKHQDANEPEPVKNVTYEPDVAAMDKKKKRRELKSRLNKINAQIDELEKRRMERAGKKQVVSSSVPSEEAAQVEAPASPALAENTNQISNEETPKIDIFEGYNGSFLFGTNTSKEWIVEDIRNHMVGKLLKAFWPRIQNVEEMNGELFKKLIANARKCETEILEASNDRDEYYRLMQLTVDQILKKTLKKDQRATEHNHQQPTQSSDELAKNHEKN.

Positions 39–160 (RQRFCYEKTD…KESTSYGQFR (122 aa)) are required for self-association and interaction with pgl-3. 3 consecutive short sequence motifs (LIR) follow at residues 107-110 (FVEV), 247-250 (FQKI), and 298-301 (FGFV). The interval 450 to 471 (AKDPEEPTTAASEGGNTYGYQE) is disordered. The segment covering 458–468 (TAASEGGNTYG) has biased composition (polar residues). The LIR 4 signature appears at 469–472 (YQEL). The stretch at 508–543 (AAMDKKKKRRELKSRLNKINAQIDELEKRRMERAGK) forms a coiled coil. Residues 545-564 (QVVSSSVPSEEAAQVEAPAS) are disordered. The region spanning 597 to 674 (NTSKEWIVED…TVDQILKKTL (78 aa)) is the KIX domain. The span at 675–685 (KKDQRATEHNH) shows a compositional bias: basic and acidic residues. Residues 675-702 (KKDQRATEHNHQQPTQSSDELAKNHEKN) form a disordered region.

Self-associates. Interacts (via the LIR motifs) with lgg-1; the interaction is direct. Interacts (via the LIR motifs) with lgg-2; the interaction is direct. Interacts with pgl-3; interaction is enhanced in the presence of RNA. Interacts with epg-2; may be modulated by prmt-1. Post-translationally, degraded by autophagy.

The protein localises to the nucleus. Its subcellular location is the cytoplasm. The protein resides in the cytoplasmic granule. Its function is as follows. Adapter protein that connects P-granules in somatic cells with the autophagic machinery. Association with other adapters such as epg-2 and P-granule components such as pgl-3 is required for the accumulation and degradation of P-granules by autophagy in somatic cells. This ensures exclusive localization of the P-granules in germ cells. This is Protein sepa-1 from Caenorhabditis elegans.